We begin with the raw amino-acid sequence, 218 residues long: Adenylate kinase (218 aa).

11–16 (GAGKGT) contacts ATP. Residues 31–60 (STGDMFREAMANKTKVGLEAKSYIDKGNLV) are NMP. AMP contacts are provided by residues Thr-32, Arg-37, 58–60 (NLV), 86–89 (GFPR), and Gln-93. An LID region spans residues 127–165 (ARYMCKNCGATYNKISKQPKVEGTCDRCGSHEFYQREDD). Arg-128 contributes to the ATP binding site. Residues Cys-131 and Cys-134 each coordinate Zn(2+). 137-138 (TY) is a binding site for ATP. The Zn(2+) site is built by Cys-151 and Cys-154. Residues Arg-162 and Arg-173 each contribute to the AMP site. Gln-201 lines the ATP pocket.

The protein belongs to the adenylate kinase family. In terms of assembly, monomer.

Its subcellular location is the cytoplasm. The enzyme catalyses AMP + ATP = 2 ADP. The protein operates within purine metabolism; AMP biosynthesis via salvage pathway; AMP from ADP: step 1/1. Catalyzes the reversible transfer of the terminal phosphate group between ATP and AMP. Plays an important role in cellular energy homeostasis and in adenine nucleotide metabolism. In Lactobacillus acidophilus (strain ATCC 700396 / NCK56 / N2 / NCFM), this protein is Adenylate kinase.